The sequence spans 453 residues: uncharacterized protein (453 aa).

To S.faecalis plasmid PAM373 EP0012.

This is an uncharacterized protein from Listeria innocua serovar 6a (strain ATCC BAA-680 / CLIP 11262).